The chain runs to 131 residues: Peptide methionine sulfoxide reductase MsrB (131 aa).

Residues 9 to 131 (DEDWKKELTP…NSASLKFQKE (123 aa)) enclose the MsrB domain. Zn(2+)-binding residues include C48, C51, C97, and C100. The active-site Nucleophile is C120.

It belongs to the MsrB Met sulfoxide reductase family. Zn(2+) serves as cofactor.

The enzyme catalyses L-methionyl-[protein] + [thioredoxin]-disulfide + H2O = L-methionyl-(R)-S-oxide-[protein] + [thioredoxin]-dithiol. The protein is Peptide methionine sulfoxide reductase MsrB of Leptospira interrogans serogroup Icterohaemorrhagiae serovar Lai (strain 56601).